Here is a 101-residue protein sequence, read N- to C-terminus: Small ribosomal subunit protein uS14 (101 aa).

Residues 48–69 (LSKLPRDSSPSRHRSRCELSGR) form a disordered region. Over residues 51 to 68 (LPRDSSPSRHRSRCELSG) the composition is skewed to basic and acidic residues.

Belongs to the universal ribosomal protein uS14 family. In terms of assembly, part of the 30S ribosomal subunit. Contacts proteins S3 and S10.

In terms of biological role, binds 16S rRNA, required for the assembly of 30S particles and may also be responsible for determining the conformation of the 16S rRNA at the A site. The polypeptide is Small ribosomal subunit protein uS14 (Stenotrophomonas maltophilia (strain R551-3)).